Consider the following 316-residue polypeptide: UDP-N-acetylenolpyruvoylglucosamine reductase (316 aa).

An FAD-binding PCMH-type domain is found at 30–194 (VGGEADYLVF…LSVKFALAPG (165 aa)). Arg-173 is a catalytic residue. Catalysis depends on Ser-223, which acts as the Proton donor. The active site involves Glu-293.

It belongs to the MurB family. The cofactor is FAD.

The protein localises to the cytoplasm. It carries out the reaction UDP-N-acetyl-alpha-D-muramate + NADP(+) = UDP-N-acetyl-3-O-(1-carboxyvinyl)-alpha-D-glucosamine + NADPH + H(+). It participates in cell wall biogenesis; peptidoglycan biosynthesis. Its function is as follows. Cell wall formation. This is UDP-N-acetylenolpyruvoylglucosamine reductase from Streptococcus pneumoniae serotype 2 (strain D39 / NCTC 7466).